The primary structure comprises 638 residues: Cytoplasmic dynein 1 intermediate chain 2 (638 aa).

Basic and acidic residues-rich tracts occupy residues 1–13 (MSDK…ELER) and 20–43 (QIRE…KKEA). Disordered stretches follow at residues 1 to 135 (MSDK…GRGP) and 154 to 209 (VTYT…HELT). Ser-2 bears the N-acetylserine mark. At Ser-51 the chain carries Diphosphoserine. 2 positions are modified to phosphoserine: Ser-51 and Ser-90. The span at 88-97 (PSSKSVSTPS) shows a compositional bias: low complexity. Thr-95 carries the post-translational modification Phosphothreonine. Phosphoserine is present on residues Ser-97, Ser-101, and Ser-104. Residues 133-165 (RGPIKLGMAKITQVDFPPREIVTYTKETQTPVT) are interaction with DYNLT1. Residues 190–209 (EKILKKDEENDSKAPPHELT) are compositionally biased toward basic and acidic residues. 6 WD repeats span residues 277–326 (SKHR…TTPE), 330–370 (HCQS…RTPV), 379–420 (AHTH…HPQD), 429–469 (SKAV…AGIS), 474–519 (GHQG…PLYS), and 568–607 (EGNP…AVPR).

This sequence belongs to the dynein intermediate chain family. Homodimer. The cytoplasmic dynein 1 complex consists of two catalytic heavy chains (HCs) and a number of non-catalytic subunits presented by intermediate chains (ICs), light intermediate chains (LICs) and light chains (LCs); the composition seems to vary in respect to the IC, LIC and LC composition. The heavy chain homodimer serves as a scaffold for the probable homodimeric assembly of the respective non-catalytic subunits. The ICs and LICs bind directly to the HC dimer and the LCs assemble on the IC dimer. Interacts with DYNLT3. Interacts with DYNLT1. Interacts (dephosphorylated at Ser-90) with DCTN1. Interacts with BICD2. Interacts with SPEF2. Interacts with CFAP61. In terms of processing, the phosphorylation status of Ser-90 appears to be involved in dynactin-dependent target binding. Pyrophosphorylation by 5-diphosphoinositol pentakisphosphate (5-IP7) promotes interaction with DCTN1. Serine pyrophosphorylation is achieved by Mg(2+)-dependent, but enzyme independent transfer of a beta-phosphate from a inositol pyrophosphate to a pre-phosphorylated serine residue. In terms of tissue distribution, skeletal muscle, testis, kidney, brain, heart and spleen.

Its subcellular location is the cytoplasm. It localises to the cytoskeleton. Acts as one of several non-catalytic accessory components of the cytoplasmic dynein 1 complex that are thought to be involved in linking dynein to cargos and to adapter proteins that regulate dynein function. Cytoplasmic dynein 1 acts as a motor for the intracellular retrograde motility of vesicles and organelles along microtubules. The intermediate chains mediate the binding of dynein to dynactin via its 150 kDa component (p150-glued) DCTN1. Involved in membrane-transport, such as Golgi apparatus, late endosomes and lysosomes. The sequence is that of Cytoplasmic dynein 1 intermediate chain 2 (Dync1i2) from Rattus norvegicus (Rat).